Reading from the N-terminus, the 78-residue chain is Large ribosomal subunit protein bL28 (78 aa).

Positions 1 to 23 are disordered; it reads MSRVCQVTGKRPMVGNNRSHAKN.

It belongs to the bacterial ribosomal protein bL28 family.

The protein is Large ribosomal subunit protein bL28 of Shewanella pealeana (strain ATCC 700345 / ANG-SQ1).